A 275-amino-acid chain; its full sequence is Putative carbamate hydrolase RutD (275 aa).

This sequence belongs to the AB hydrolase superfamily. Hydrolase RutD family.

It catalyses the reaction carbamate + 2 H(+) = NH4(+) + CO2. Functionally, involved in pyrimidine catabolism. May facilitate the hydrolysis of carbamate, a reaction that can also occur spontaneously. The sequence is that of Putative carbamate hydrolase RutD from Escherichia coli O6:H1 (strain CFT073 / ATCC 700928 / UPEC).